We begin with the raw amino-acid sequence, 645 residues long: Aminopeptidase P1 (645 aa).

Serine 2 bears the N-acetylserine mark. A peptide-binding residues include arginine 69 and histidine 420. Mn(2+) is bound by residues aspartate 440, aspartate 451, and histidine 514. 3 residues coordinate a peptide: histidine 514, histidine 523, and glutamate 549. Glutamate 549 and glutamate 563 together coordinate Mn(2+).

The protein belongs to the peptidase M24B family. Homodimer. Interacts with N-1-naphthylphthalamic acid (NPA). Mn(2+) is required as a cofactor. The cofactor is Zn(2+). Glycosylated. Also present in a non-glycosylated form. In terms of tissue distribution, ubiquitous with preferential expression in 5 days-old seedlings, roots, flowers, inflorescences and rosette leaves (at protein levels).

Its subcellular location is the cytoplasm. The protein resides in the cell membrane. The protein localises to the microsome membrane. The catalysed reaction is Release of any N-terminal amino acid, including proline, that is linked to proline, even from a dipeptide or tripeptide.. Inhibited by EGTA and apstatin, and, to some extent, by the flavonoid kaempferol. In terms of biological role, catalyzes the removal of a penultimate prolyl residue from the N-termini of peptides, such as Arg-Pro-Pro. Aminopeptidase that binds to the auxin transport inhibitor N-1-naphthylphthalamic acid (NPA). May play a negative role in the regulation of PIN auxin transport proteins. This Arabidopsis thaliana (Mouse-ear cress) protein is Aminopeptidase P1.